The following is a 474-amino-acid chain: Tumor necrosis factor receptor superfamily member 1B (474 aa).

Residues 1–22 form the signal peptide; that stretch reads MAPAALWVALVFELQLWATGHT. Residues 23 to 258 are Extracellular-facing; it reads VPAQVVLTPY…PIIEQSTKGG (236 aa). Thr30 carries an O-linked (GalNAc...) threonine glycan. TNFR-Cys repeat units follow at residues 39–77, 78–119, 120–164, and 165–203; these read ECQISQEYYDRKAQMCCAKCPPGQYVKHFCNKTSDTVCA, DCEA…NRVC, ACEA…VLCK, and ACAPGTFSDTTSSTDVCRPHRICSILAIPGNASTDAVCA. Cystine bridges form between Cys40–Cys54, Cys55–Cys68, Cys58–Cys76, Cys79–Cys94, Cys97–Cys111, Cys101–Cys119, Cys121–Cys127, Cys136–Cys145, Cys139–Cys163, and Cys166–Cys181. Residue Asn69 is glycosylated (N-linked (GlcNAc...) asparagine). N-linked (GlcNAc...) asparagine glycosylation occurs at Asn195. Thr208 and Thr224 each carry an O-linked (GalNAc...) threonine glycan. The interval 220–243 is disordered; sequence QPEPTRSQPLDQEPGPSQTPSILT. A helical membrane pass occupies residues 259 to 288; it reads ISLPIGLIVGVTSLGLLMLGLVNCIILVQR. Topologically, residues 289-474 are cytoplasmic; sequence KKKPSCLQRD…WFDQIAVKVA (186 aa). 3 disordered regions span residues 295-314, 321-378, and 397-463; these read LQRDAKVPHVPDEKSQDAVG, LTTA…GSHG, and SQCS…PSQA. Basic and acidic residues predominate over residues 297–310; that stretch reads RDAKVPHVPDEKSQ. 2 stretches are compositionally biased toward low complexity: residues 324–338 and 363–378; these read APSSSSSSLESSASA and ARASSRISDSSHGSHG. A Phosphoserine modification is found at Ser331. Residues 429-442 show a composition bias toward polar residues; the sequence is ECPSQSPCETTETL.

Binds to TRAF2. Interacts with BMX. Interacts (activated form) with XPNPEP3.

It is found in the membrane. Receptor with high affinity for TNFSF2/TNF-alpha and approximately 5-fold lower affinity for homotrimeric TNFSF1/lymphotoxin-alpha. The TRAF1/TRAF2 complex recruits the apoptotic suppressors BIRC2 and BIRC3 to TNFRSF1B/TNFR2. In Mus musculus (Mouse), this protein is Tumor necrosis factor receptor superfamily member 1B (Tnfrsf1b).